Reading from the N-terminus, the 156-residue chain is Small ribosomal subunit protein uS7 (156 aa).

The protein belongs to the universal ribosomal protein uS7 family. In terms of assembly, part of the 30S ribosomal subunit. Contacts proteins S9 and S11.

In terms of biological role, one of the primary rRNA binding proteins, it binds directly to 16S rRNA where it nucleates assembly of the head domain of the 30S subunit. Is located at the subunit interface close to the decoding center, probably blocks exit of the E-site tRNA. The sequence is that of Small ribosomal subunit protein uS7 from Lacticaseibacillus casei (strain BL23) (Lactobacillus casei).